The chain runs to 476 residues: Nyctalopin (476 aa).

An N-terminal signal peptide occupies residues Met-1 to Ala-18. The 39-residue stretch at Thr-19–Cys-57 folds into the LRRNT domain. 11 LRR repeats span residues Glu-58–Thr-79, Ser-82–Gly-103, Arg-106–Ala-128, Arg-131–Pro-154, Ala-155–Ala-177, Asn-178–Gly-199, Arg-202–Asp-223, Ala-226–Gly-247, Arg-250–Asp-271, Glu-274–Asn-295, and Gly-298–Pro-319. N-linked (GlcNAc...) asparagine glycosylation is present at Asn-92. N-linked (GlcNAc...) asparagine glycosylation is present at Asn-178. N-linked (GlcNAc...) asparagine glycosylation is present at Asn-295. An LRRCT domain is found at Asn-331–Asp-383. 4 N-linked (GlcNAc...) asparagine glycosylation sites follow: Asn-388, Asn-427, Asn-434, and Asn-438.

It belongs to the small leucine-rich proteoglycan (SLRP) family. SLRP class IV subfamily. Expressed abundantly in retina with lower levels in brain, lung, spleen and testis. Not detected in kidney, heart or liver. In the retina, highest expression found in the inner nuclear layer and ganglion cell layer.

It localises to the secreted. It is found in the extracellular space. Its subcellular location is the extracellular matrix. The polypeptide is Nyctalopin (Nyx) (Mus musculus (Mouse)).